A 359-amino-acid polypeptide reads, in one-letter code: Peptide chain release factor 1 (359 aa).

N5-methylglutamine is present on glutamine 236.

This sequence belongs to the prokaryotic/mitochondrial release factor family. Post-translationally, methylated by PrmC. Methylation increases the termination efficiency of RF1.

The protein localises to the cytoplasm. Functionally, peptide chain release factor 1 directs the termination of translation in response to the peptide chain termination codons UAG and UAA. This is Peptide chain release factor 1 from Streptococcus thermophilus (strain ATCC BAA-250 / LMG 18311).